The primary structure comprises 411 residues: MSIVVKNNIHWVGQRDWEVRDFHGTEYKTLRGSSYNSYLIREEKNVLIDTVDHKFSREFVQNLRNEIDLADIDYIVINHAEEDHAGALTELMAQIPDTPIYCTANAIDSINGHHHHPEWNFNVVKTGDTLDIGNGKQLIFVETPMLHWPDSMMTYLTGDAVLFSNDAFGQHYCDEHLFNDEVDQTELFEQCQRYYANILTPFSRLVTPKITEILGFNLPVDMIATSHGVVWRDNPTQIVELYLKWAADYQEDRITIFYDTMSNNTRMMADAIAQGIAETDPRVAVDRLSTRLQDAGFEMSLSLKAKWRPDQDALELCREHGREIARQWALAPLPQSTVNTVVKEETSATTTADLGPRMQCSVCQWIYDPAKGEPMQDVAPGTPWSEVPDNFLCPECSLGKDVFDELASEAK.

The interval 30–210 is zinc metallo-hydrolase; sequence LRGSSYNSYL…PFSRLVTPKI (181 aa). 10 residues coordinate Fe cation: His-79, Glu-81, Asp-83, His-147, Asp-166, His-227, Cys-360, Cys-363, Cys-393, and Cys-396. Positions 355–406 constitute a Rubredoxin-like domain; it reads GPRMQCSVCQWIYDPAKGEPMQDVAPGTPWSEVPDNFLCPECSLGKDVFDEL.

The protein in the N-terminal section; belongs to the zinc metallo-hydrolase group 3 family. In terms of assembly, homotetramer. Requires Fe cation as cofactor.

The protein resides in the cytoplasm. Its pathway is nitrogen metabolism; nitric oxide reduction. Functionally, anaerobic nitric oxide reductase; uses NADH to detoxify nitric oxide (NO), protecting several 4Fe-4S NO-sensitive enzymes. Has at least 2 reductase partners, only one of which (NorW, flavorubredoxin reductase) has been identified. NO probably binds to the di-iron center. Also able to function as an aerobic oxygen reductase. In Escherichia coli O157:H7, this protein is Anaerobic nitric oxide reductase flavorubredoxin homolog.